Consider the following 249-residue polypeptide: Putative SAP domain-containing protein 049L (249 aa).

Composition is skewed to basic and acidic residues over residues 1–12, 22–38, and 95–107; these read MAAPKAEGEDKP, PKPE…KEFC, and KKAE…KLDE. Residues 1–110 form a disordered region; that stretch reads MAAPKAEGED…DDKKLDEATG (110 aa). The region spanning 119–153 is the SAP domain; that stretch reads LSKLTIQTLKGMCKTRNLKISGNKAALVQRLIEAD.

The sequence is that of Putative SAP domain-containing protein 049L from Frog virus 3 (isolate Goorha) (FV-3).